The primary structure comprises 142 residues: Large-conductance mechanosensitive channel (142 aa).

Helical transmembrane passes span 15–35, 38–58, and 82–102; these read AFVMRGNVVDLAVGVIIGAAF, IVTSLVNDIFMPIIGMIIGNI, and GMFIQEIVNFLIIALCVFVAI.

It belongs to the MscL family. Homopentamer.

The protein localises to the cell inner membrane. Its function is as follows. Channel that opens in response to stretch forces in the membrane lipid bilayer. May participate in the regulation of osmotic pressure changes within the cell. The protein is Large-conductance mechanosensitive channel of Fusobacterium nucleatum subsp. nucleatum (strain ATCC 25586 / DSM 15643 / BCRC 10681 / CIP 101130 / JCM 8532 / KCTC 2640 / LMG 13131 / VPI 4355).